Consider the following 347-residue polypeptide: Protein RecA (347 aa).

65-72 lines the ATP pocket; the sequence is GPESSGKT.

It belongs to the RecA family.

It localises to the cytoplasm. Can catalyze the hydrolysis of ATP in the presence of single-stranded DNA, the ATP-dependent uptake of single-stranded DNA by duplex DNA, and the ATP-dependent hybridization of homologous single-stranded DNAs. It interacts with LexA causing its activation and leading to its autocatalytic cleavage. The sequence is that of Protein RecA from Aliivibrio salmonicida (strain LFI1238) (Vibrio salmonicida (strain LFI1238)).